We begin with the raw amino-acid sequence, 442 residues long: Ribosomal protein uS12 methylthiotransferase RimO (442 aa).

One can recognise an MTTase N-terminal domain in the interval 9 to 119; the sequence is PRIGFVSLGC…VLSHVHQYVP (111 aa). Cysteine 18, cysteine 54, cysteine 83, cysteine 151, cysteine 155, and cysteine 158 together coordinate [4Fe-4S] cluster. Residues 137–375 form the Radical SAM core domain; that stretch reads LTPRHYAYLK…QLQQAISTQR (239 aa). The 66-residue stretch at 377–442 folds into the TRAM domain; that stretch reads QDKIGREVLV…DEYDLWGSRV (66 aa).

Belongs to the methylthiotransferase family. RimO subfamily. Requires [4Fe-4S] cluster as cofactor.

Its subcellular location is the cytoplasm. The enzyme catalyses L-aspartate(89)-[ribosomal protein uS12]-hydrogen + (sulfur carrier)-SH + AH2 + 2 S-adenosyl-L-methionine = 3-methylsulfanyl-L-aspartate(89)-[ribosomal protein uS12]-hydrogen + (sulfur carrier)-H + 5'-deoxyadenosine + L-methionine + A + S-adenosyl-L-homocysteine + 2 H(+). Functionally, catalyzes the methylthiolation of an aspartic acid residue of ribosomal protein uS12. This Pectobacterium atrosepticum (strain SCRI 1043 / ATCC BAA-672) (Erwinia carotovora subsp. atroseptica) protein is Ribosomal protein uS12 methylthiotransferase RimO.